Consider the following 445-residue polypeptide: Putative aldehyde dehydrogenase AldX (445 aa).

Active-site residues include Glu214 and Cys248.

Belongs to the aldehyde dehydrogenase family.

The enzyme catalyses an aldehyde + NAD(+) + H2O = a carboxylate + NADH + 2 H(+). The chain is Putative aldehyde dehydrogenase AldX (aldX) from Bacillus subtilis (strain 168).